Consider the following 506-residue polypeptide: Steroid (22S)-hydroxylase (506 aa).

Residues 12–32 (LLFFLPFILLALLTFYTTTVA) form a helical membrane-spanning segment. Cys449 lines the heme pocket.

It belongs to the cytochrome P450 family. Heme is required as a cofactor. In terms of tissue distribution, highly expressed in roots and leaf blades. Expressed in shoot apex, stems, leaf sheaths, inflorescences and flowers.

Its subcellular location is the membrane. The catalysed reaction is a C28-steroid + reduced [NADPH--hemoprotein reductase] + O2 = a (22S)-22-hydroxy C28-steroid + oxidized [NADPH--hemoprotein reductase] + H2O + H(+). It carries out the reaction campesterol + reduced [NADPH--hemoprotein reductase] + O2 = (22S)-22-hydroxycampesterol + oxidized [NADPH--hemoprotein reductase] + H2O + H(+). The enzyme catalyses campestanol + reduced [NADPH--hemoprotein reductase] + O2 = 6-deoxycathasterone + oxidized [NADPH--hemoprotein reductase] + H2O + H(+). It participates in plant hormone biosynthesis; brassinosteroid biosynthesis. Functionally, catalyzes the C22-alpha-hydroxylation step in brassinosteroid biosynthesis, which is the rate-limiting step in this biosynthetic pathway. Catalyzes the conversion of campesterol (CR) to (22S)-22-hydroxycampesterol (22-OHCR, 22-hydroxyCR) and of campestanol (CN) to 6-deoxycathasterone (6-deoxoCT). Required for auxin responses involved in the regulation of epidermal cells length of the lamina joint. The chain is Steroid (22S)-hydroxylase from Oryza sativa subsp. japonica (Rice).